Consider the following 147-residue polypeptide: MAIGVTQNTFQLNIVSAEGPLFSGKAHALAISGLDGELGIRPGHSPLLSRIKPGVAYFQTDLKGDDEILYISGGILEVQPSLVTVLADTAMHGKDIDEARANEARRAAEENINKQGNDINFAQAQMDLAKAMAQLRAVELTQKQRRR.

Belongs to the ATPase epsilon chain family. As to quaternary structure, F-type ATPases have 2 components, CF(1) - the catalytic core - and CF(0) - the membrane proton channel. CF(1) has five subunits: alpha(3), beta(3), gamma(1), delta(1), epsilon(1). CF(0) has three main subunits: a, b and c.

It is found in the cell inner membrane. Functionally, produces ATP from ADP in the presence of a proton gradient across the membrane. The protein is ATP synthase epsilon chain 2 of Photobacterium profundum (strain SS9).